A 467-amino-acid polypeptide reads, in one-letter code: 3-isopropylmalate dehydratase large subunit (467 aa).

Cys-347, Cys-407, and Cys-410 together coordinate [4Fe-4S] cluster. The span at 422–442 shows a compositional bias: polar residues; sequence QISASSSNRNFKGRQGSSSGR. The tract at residues 422–443 is disordered; sequence QISASSSNRNFKGRQGSSSGRT.

This sequence belongs to the aconitase/IPM isomerase family. LeuC type 1 subfamily. As to quaternary structure, heterodimer of LeuC and LeuD. The cofactor is [4Fe-4S] cluster.

It carries out the reaction (2R,3S)-3-isopropylmalate = (2S)-2-isopropylmalate. The protein operates within amino-acid biosynthesis; L-leucine biosynthesis; L-leucine from 3-methyl-2-oxobutanoate: step 2/4. Catalyzes the isomerization between 2-isopropylmalate and 3-isopropylmalate, via the formation of 2-isopropylmaleate. In Nostoc punctiforme (strain ATCC 29133 / PCC 73102), this protein is 3-isopropylmalate dehydratase large subunit.